We begin with the raw amino-acid sequence, 341 residues long: L-threonine 3-dehydrogenase (341 aa).

Position 38 (Cys38) interacts with Zn(2+). Catalysis depends on charge relay system residues Thr40 and His43. The Zn(2+) site is built by His63, Glu64, Cys93, Cys96, Cys99, and Cys107. Residues Ile175, Asp195, Arg200, 262–264 (LGI), and 286–287 (IY) contribute to the NAD(+) site.

The protein belongs to the zinc-containing alcohol dehydrogenase family. In terms of assembly, homotetramer. Zn(2+) is required as a cofactor.

It localises to the cytoplasm. The catalysed reaction is L-threonine + NAD(+) = (2S)-2-amino-3-oxobutanoate + NADH + H(+). The protein operates within amino-acid degradation; L-threonine degradation via oxydo-reductase pathway; glycine from L-threonine: step 1/2. Catalyzes the NAD(+)-dependent oxidation of L-threonine to 2-amino-3-ketobutyrate. This Escherichia coli O127:H6 (strain E2348/69 / EPEC) protein is L-threonine 3-dehydrogenase.